The primary structure comprises 669 residues: Threonine--tRNA ligase (669 aa).

The TGS domain occupies 3 to 60 (DAQQITLLVDGEETKVTTGTTGAELFFERRDVVVARVNGELKDLDQELPEGAEVEGVT). A catalytic region spans residues 260 to 566 (DHRKLGSELD…LTEHYAGAFP (307 aa)). Zn(2+) contacts are provided by Cys365, His416, and His543.

This sequence belongs to the class-II aminoacyl-tRNA synthetase family. In terms of assembly, homodimer. Requires Zn(2+) as cofactor.

It localises to the cytoplasm. It carries out the reaction tRNA(Thr) + L-threonine + ATP = L-threonyl-tRNA(Thr) + AMP + diphosphate + H(+). In terms of biological role, catalyzes the attachment of threonine to tRNA(Thr) in a two-step reaction: L-threonine is first activated by ATP to form Thr-AMP and then transferred to the acceptor end of tRNA(Thr). Also edits incorrectly charged L-seryl-tRNA(Thr). This chain is Threonine--tRNA ligase, found in Pseudarthrobacter chlorophenolicus (strain ATCC 700700 / DSM 12829 / CIP 107037 / JCM 12360 / KCTC 9906 / NCIMB 13794 / A6) (Arthrobacter chlorophenolicus).